Here is a 1037-residue protein sequence, read N- to C-terminus: MGFKKLVSFQPDYVPQYHITKYISERTKLQLVHINHKTSPLVHGYFAVPTECLNDSGAPHTLEHLIFMGSKSYPYKGLLDTAGNLSLSNTNAWTDTDQTVYTLSSAGWKGFSKLLPAYLDHILHPTLTDEACLTEVYHIDPENLGDKGVVFSEMEAIETQGWYISGLEKQRLMFPEGSGYRSETGGLTKNLRTLTNDEIRQFHKSLYSSDNLCVIVCGNVPTDELLTVMEEWDNKLPEIPSNIPKKRPFLDNKLSHIPQSRDKVTESTVEFPELDESQGELLFSWIGVPYSDFRNDLAVDVLLDYFTDSALAVFTRELVEIDDPMANSTDCCTDYFMRTIIDLRIQGVPTEKIAATKTKVLEILKTHTIDLSRVRQVVENTKWEYLLNYEKNGESRFSSAVITDYIYGNEDGSSLVSSLKDLSDFDALLQWSQKDWQSLLNRIFVDNKPIIVTAKPSALMYEQLEKEKSDLIKQREAEFDDEKKLVLLKRLNNAKNINDRPIPKSLLQKFEIDNPSKSVEFVNTKSIATVDSYKYNNVSDPLTKKILETRPDNFPLFIHLNHFPSQFIELHFLVNSASIKDTSLLPYFNMFDELFSMPMKILDEESNVETMLSFEEVVAKLKSETIDAQINQGLKGSCPDLINFKIQCRAGGYSNSVQWIKHCLFDMVFDENRVRILLENYLNSIVEWKRNGNVMLSSLTNRNLYSARSLKKSTDPLFVEAKLQEIFAEIENGNFEKEILPRIETMRKQLRANFNKFHILVLGDISKIDDVYEPWNPLIKCLNIAHPVEKLKIPPVPRALDTISSICRTPGEKAFIITTPASESAYMNLITSIPFNLDYHDPEYAIVSLASEYLECVEGPFWKGIRGAGLAYGASMLKLCEINSWGFNIYRGADIIKCYEVGKQIVQDYASGALEFDEQLIQGAISSIINRLATIECGYFETALSKYVDEFCLQRGNNFNELYLERLQNVTKTDLKNAMQKYFVNMFDSNKSVAFVSCHPAKLESVQEFFETQGFTVEIEELEDDDDEIDSEEDENA.

This is an uncharacterized protein from Saccharomyces cerevisiae (strain ATCC 204508 / S288c) (Baker's yeast).